The primary structure comprises 3919 residues: Intermembrane lipid transfer protein Vps13D (3919 aa).

Residues 4-114 (DLITWVLNTY…QDLEYKLAVL (111 aa)) enclose the Chorein N-terminal domain. The tract at residues 706–736 (TSDDDETYLTPCSTPPASEKSGSESPTLLEN) is disordered. A UBA domain is found at 2292–2334 (KADSDLEKAAPLVAMGFEISDCLYAMQINNWRINDAAIWLSQQ). The 277-residue stretch at 2837–3113 (ELYISAPVWI…YVMDDPLGQQ (277 aa)) folds into the SHR-BD domain. The interval 3749 to 3768 (VRETSRDSHRNAPERKRLPR) is disordered. A compositionally biased stretch (basic and acidic residues) spans 3751 to 3764 (ETSRDSHRNAPERK).

The protein belongs to the VPS13 family. Expressed in intestinal cells (at protein level).

Its subcellular location is the cytoplasm. The protein resides in the lysosome. Mediates the transfer of lipids between membranes at organelle contact sites. Functions in promoting mitochondrial clearance by mitochondrial autophagy (mitophagy), also possibly by positively regulating mitochondrial fission. Mitophagy plays an important role in regulating cell health and mitochondrial size and homeostasis. The polypeptide is Intermembrane lipid transfer protein Vps13D (Drosophila melanogaster (Fruit fly)).